A 329-amino-acid polypeptide reads, in one-letter code: DNA-directed RNA polymerase subunit alpha (329 aa).

The tract at residues 1 to 231 (MQTNLLKPKT…EQLAVFAQLE (231 aa)) is alpha N-terminal domain (alpha-NTD). Positions 249–329 (FDPILLRPVD…SWPPAGLDKR (81 aa)) are alpha C-terminal domain (alpha-CTD).

This sequence belongs to the RNA polymerase alpha chain family. Homodimer. The RNAP catalytic core consists of 2 alpha, 1 beta, 1 beta' and 1 omega subunit. When a sigma factor is associated with the core the holoenzyme is formed, which can initiate transcription.

It carries out the reaction RNA(n) + a ribonucleoside 5'-triphosphate = RNA(n+1) + diphosphate. Its function is as follows. DNA-dependent RNA polymerase catalyzes the transcription of DNA into RNA using the four ribonucleoside triphosphates as substrates. The protein is DNA-directed RNA polymerase subunit alpha of Polaromonas sp. (strain JS666 / ATCC BAA-500).